The chain runs to 177 residues: MSRIAKSPITLPSGVDVTINGTDVSVKGSKGALSKTFNHAVSVSLEDGVVTVAPKNESKNAWAQAGTARSIINNMVLGVTEGFEKKLQLVGVGYRAQAQGKVLNLTLGFSHPVNHELPEGVTVETPSQTEIVVKGADKQVVGQVAAEIRGYRPPEPYKGKGVKYADEYILRKEAKKK.

This sequence belongs to the universal ribosomal protein uL6 family. As to quaternary structure, part of the 50S ribosomal subunit.

In terms of biological role, this protein binds to the 23S rRNA, and is important in its secondary structure. It is located near the subunit interface in the base of the L7/L12 stalk, and near the tRNA binding site of the peptidyltransferase center. The polypeptide is Large ribosomal subunit protein uL6 (Hydrogenovibrio crunogenus (strain DSM 25203 / XCL-2) (Thiomicrospira crunogena)).